The following is a 170-amino-acid chain: MLPLLALFLLIGPAVSTTTRDREDLTFGAEAESWVTVNLKGIPVPSIELKLQELKRSRTRQFYGLMGKRVEGVHPIQSAERTGYQLGRIVQDLLGTRGLSIEGSCRQETNHQSAGPGAVARESLQSQRGRSEPPNHQQHVALSLGTEEDDQSSERAPRDASQMMPRPSRP.

Positions 1-16 (MLPLLALFLLIGPAVS) are cleaved as a signal peptide. A propeptide spanning residues 17–54 (TTTRDREDLTFGAEAESWVTVNLKGIPVPSIELKLQEL) is cleaved from the precursor. Methionine 66 is modified (methionine amide). Residues 67–170 (GKRVEGVHPI…SQMMPRPSRP (104 aa)) constitute a propeptide that is removed on maturation. The interval 107 to 170 (QETNHQSAGP…SQMMPRPSRP (64 aa)) is disordered. Residues 123–140 (SLQSQRGRSEPPNHQQHV) show a composition bias toward polar residues.

Belongs to the tachykinin family.

The protein localises to the secreted. In terms of biological role, tachykinins are active peptides which excite neurons, evoke behavioral responses, are potent vasodilators and secretagogues, and contract (directly or indirectly) many smooth muscles. Hemokinin induces plasma extravasation, mast cell degranulation, muscle contraction, salivary secretion and scratching behavior. Increases sperm motility. Induces potent analgesic effects and may play a role in pain modulation. Promotes survival of bone marrow B lineage cells and of cultured LPS-stimulated pre-B cells and may act as an autocrine factor required for B-cell survival and proliferation. Lowers systemic arterial pressure following intravenous injection. Induces interferon-gamma production and may play a role in the inflammatory response. Shows potent affinity and specificity for the NK-1 receptor. This Rattus norvegicus (Rat) protein is Tachykinin-4.